The sequence spans 335 residues: Transmembrane protein 120B (335 aa).

A coiled-coil region spans residues 1–39; it reads MSLQKCQEEWGELEKEFQQLQETHKVYKQKLEELNGLQN. Transmembrane regions (helical) follow at residues 100–122, 130–150, 157–177, 193–213, 268–288, and 300–320; these read GLYLNLVLGNVNVTLLSNQAKFA, FKLYLTIILLLGAITCRFVLH, VFNFLLVWYYCTLTIRESILI, VSTFLSGVMLTWPDGLMYQIF, FLLPFLFFGHFWQLYNAITLF, and QVFVLALTFLLLFLGNFLTTL.

The protein belongs to the TMEM120 family.

Its subcellular location is the nucleus inner membrane. Its function is as follows. Necessary for efficient adipogenesis. Does not show ion channel activity. The protein is Transmembrane protein 120B (tmem120b) of Xenopus tropicalis (Western clawed frog).